We begin with the raw amino-acid sequence, 530 residues long: Probable ATP-binding protein YbiT (530 aa).

2 ABC transporter domains span residues 2-252 and 320-526; these read LVSS…ERLL and LEVE…YLRS. ATP contacts are provided by residues 34–41 and 352–359; these read GANGSGKS and GTNGVGKS.

Belongs to the ABC transporter superfamily. ABCF family. YbiT subfamily.

In Escherichia coli O157:H7, this protein is Probable ATP-binding protein YbiT (ybiT).